Here is a 505-residue protein sequence, read N- to C-terminus: Endoglucanase 5 (505 aa).

A signal peptide spans 1–31; it reads MWMRRNQIVRKLTLGVVTTVLGMSLSFSALS. The interval 32–334 is catalytic; it reads ATPVETHGQL…REQIRAGANL (303 aa). Substrate contacts are provided by residues His64, 68–69, Tyr95, and His130; that span reads WF. Glu168 acts as the Proton donor in catalysis. Position 230 (Tyr230) interacts with substrate. Catalysis depends on Glu256, which acts as the Nucleophile. Residues 262–263, Trp290, and 295–297 contribute to the substrate site; these read AS and KSE. Residues 332 to 355 form a disordered region; it reads ANLGGGDTPTTPTEPTNPGNGTTG. Positions 335–352 are linker; it reads GGGDTPTTPTEPTNPGNG. Positions 339–355 are enriched in low complexity; the sequence is TPTTPTEPTNPGNGTTG. The CBM3 domain maps to 353 to 505; the sequence is TTGDVVLQYR…KGTLVWGVEP (153 aa).

The protein belongs to the glycosyl hydrolase 5 (cellulase A) family.

It is found in the secreted. It catalyses the reaction Endohydrolysis of (1-&gt;4)-beta-D-glucosidic linkages in cellulose, lichenin and cereal beta-D-glucans.. Its function is as follows. Endoglucanase with some exoglucanase activity. The polypeptide is Endoglucanase 5 (celV) (Pectobacterium carotovorum subsp. carotovorum (Erwinia carotovora subsp. carotovora)).